A 610-amino-acid chain; its full sequence is Propanediol dehydratase-reactivating factor large subunit (610 aa).

Asparagine 11 to serine 13 contacts ATP. Threonine 105, aspartate 166, and aspartate 183 together coordinate Mg(2+). ATP is bound by residues glutamate 459–lysine 462, glycine 557–serine 558, and arginine 591.

It belongs to the DdrA/PduG family. In terms of assembly, forms a heterotetramer PduG(2)/PduH(2). The cofactor is Mg(2+).

The protein localises to the bacterial microcompartment. It catalyses the reaction ATP + H2O = ADP + phosphate + H(+). It participates in polyol metabolism; 1,2-propanediol degradation. In terms of biological role, large subunit of the propanediol dehydratase-reactivating factor (DDR), which reactivates suicidally inhibited adenosylcobalamin-dependent propanediol dehydratase (diol dehydratase, DDH) found in the bacterial microcompartment (BMC) dedicated to 1,2-propanediol (1,2-PD) degradation. Reactivates inactivated DDH in the presence of ATP, Mg(2+) and free adenosylcobalamin (AdoCbl), by mediating the exchange of the tightly bound damaged cofactor AdoCbl for a free intact one. This subunit contains the adenosine nucleotide binding site. Its function is as follows. Expression of a cosmid containing the full 21-gene pdu operon in E.coli allows E.coli to grow on 1,2-propanediol (1,2-PD) with the appearance of bacterial microcompartments (BMC) in its cytoplasm. The 1,2-PD-specific bacterial microcompartment (BMC) concentrates low levels of 1,2-PD catabolic enzymes, concentrates volatile reaction intermediates thus enhancing pathway flux and keeps the level of toxic, mutagenic propionaldehyde low. This is Propanediol dehydratase-reactivating factor large subunit from Citrobacter freundii.